The sequence spans 68 residues: Protein transport protein Sec61 subunit gamma (68 aa).

Residues Met1–Glu32 are Cytoplasmic-facing. Residues Phe33–Ile61 form a helical membrane-spanning segment. Topologically, residues Asn62–Gly68 are extracellular.

This sequence belongs to the SecE/SEC61-gamma family. In terms of assembly, the SEC61 channel-forming translocon complex consists of channel-forming core components SEC61A1, SEC61B and SEC61G and different auxiliary components such as SEC62 and SEC63. The SEC61 channel associates with the multi-pass translocon (MPT) complex.

Its subcellular location is the endoplasmic reticulum membrane. In terms of biological role, component of SEC61 channel-forming translocon complex that mediates transport of signal peptide-containing precursor polypeptides across the endoplasmic reticulum (ER). Forms a ribosome receptor and a gated pore in the ER membrane, both functions required for cotranslational translocation of nascent polypeptides. The SEC61 channel is also involved in ER membrane insertion of transmembrane proteins: it mediates membrane insertion of the first few transmembrane segments of proteins, while insertion of subsequent transmembrane regions of multi-pass membrane proteins is mediated by the multi-pass translocon (MPT) complex. The protein is Protein transport protein Sec61 subunit gamma (sec61g) of Gadus morhua (Atlantic cod).